A 406-amino-acid polypeptide reads, in one-letter code: Serine/threonine transporter SstT (406 aa).

Helical transmembrane passes span 11–31 (IGLV…GWLM), 45–65 (FVGA…MAAI), 79–99 (VLIM…VASF), 141–161 (AIAN…GLAL), 185–205 (FVIA…IAET), 216–236 (LLTI…PIIV), 298–318 (MAGA…TLGV), 330–350 (VVAT…LLLI), and 357–377 (FNIP…IGVV).

This sequence belongs to the dicarboxylate/amino acid:cation symporter (DAACS) (TC 2.A.23) family.

It localises to the cell inner membrane. The enzyme catalyses L-serine(in) + Na(+)(in) = L-serine(out) + Na(+)(out). It carries out the reaction L-threonine(in) + Na(+)(in) = L-threonine(out) + Na(+)(out). Its function is as follows. Involved in the import of serine and threonine into the cell, with the concomitant import of sodium (symport system). The sequence is that of Serine/threonine transporter SstT from Psychrobacter sp. (strain PRwf-1).